We begin with the raw amino-acid sequence, 269 residues long: Tryptophan synthase alpha chain (269 aa).

Residues glutamate 49 and aspartate 60 each act as proton acceptor in the active site.

Belongs to the TrpA family. Tetramer of two alpha and two beta chains.

It carries out the reaction (1S,2R)-1-C-(indol-3-yl)glycerol 3-phosphate + L-serine = D-glyceraldehyde 3-phosphate + L-tryptophan + H2O. It participates in amino-acid biosynthesis; L-tryptophan biosynthesis; L-tryptophan from chorismate: step 5/5. In terms of biological role, the alpha subunit is responsible for the aldol cleavage of indoleglycerol phosphate to indole and glyceraldehyde 3-phosphate. This chain is Tryptophan synthase alpha chain, found in Pseudomonas putida (strain ATCC 47054 / DSM 6125 / CFBP 8728 / NCIMB 11950 / KT2440).